We begin with the raw amino-acid sequence, 66 residues long: Brevinin-1CDYd (66 aa).

A signal peptide spans 1-22; it reads MFTLKKSLLILFFLGTINFSLC. Residues 23 to 44 constitute a propeptide that is removed on maturation; sequence EEERNAEEERRDDPEERDVEVE. Residues Cys60 and Cys66 are joined by a disulfide bond.

The protein belongs to the frog skin active peptide (FSAP) family. Brevinin subfamily. As to expression, expressed by the skin glands.

The protein resides in the secreted. Its function is as follows. Antimicrobial peptide. In Rana dybowskii (Dybovsky's frog), this protein is Brevinin-1CDYd.